A 310-amino-acid polypeptide reads, in one-letter code: p-hydroxybenzoic acid efflux pump subunit AaeA (310 aa).

The helical transmembrane segment at 12 to 32 (AITVVLVILAFIAIFNAWVYY) threads the bilayer.

Belongs to the membrane fusion protein (MFP) (TC 8.A.1) family.

The protein localises to the cell inner membrane. In terms of biological role, forms an efflux pump with AaeB. The polypeptide is p-hydroxybenzoic acid efflux pump subunit AaeA (Escherichia coli O127:H6 (strain E2348/69 / EPEC)).